Reading from the N-terminus, the 513-residue chain is Histidine ammonia-lyase (513 aa).

A cross-link (5-imidazolinone (Ala-Gly)) is located at residues 145–147; the sequence is ASG. Ser146 is subject to 2,3-didehydroalanine (Ser).

This sequence belongs to the PAL/histidase family. Post-translationally, contains an active site 4-methylidene-imidazol-5-one (MIO), which is formed autocatalytically by cyclization and dehydration of residues Ala-Ser-Gly.

It localises to the cytoplasm. The enzyme catalyses L-histidine = trans-urocanate + NH4(+). The protein operates within amino-acid degradation; L-histidine degradation into L-glutamate; N-formimidoyl-L-glutamate from L-histidine: step 1/3. The sequence is that of Histidine ammonia-lyase from Vibrio vulnificus (strain CMCP6).